Consider the following 179-residue polypeptide: Ribosomal RNA small subunit methyltransferase G (179 aa).

S-adenosyl-L-methionine contacts are provided by residues G54, F59, 105–106 (IE), and R121.

It belongs to the methyltransferase superfamily. RNA methyltransferase RsmG family.

It localises to the cytoplasm. It carries out the reaction guanosine(527) in 16S rRNA + S-adenosyl-L-methionine = N(7)-methylguanosine(527) in 16S rRNA + S-adenosyl-L-homocysteine. Functionally, specifically methylates the N7 position of guanine in position 527 of 16S rRNA. This Helicobacter bizzozeronii protein is Ribosomal RNA small subunit methyltransferase G.